Reading from the N-terminus, the 367-residue chain is Phosphoribosylaminoimidazole-succinocarboxamide synthase (367 aa).

It belongs to the SAICAR synthetase family.

It carries out the reaction 5-amino-1-(5-phospho-D-ribosyl)imidazole-4-carboxylate + L-aspartate + ATP = (2S)-2-[5-amino-1-(5-phospho-beta-D-ribosyl)imidazole-4-carboxamido]succinate + ADP + phosphate + 2 H(+). Its pathway is purine metabolism; IMP biosynthesis via de novo pathway; 5-amino-1-(5-phospho-D-ribosyl)imidazole-4-carboxamide from 5-amino-1-(5-phospho-D-ribosyl)imidazole-4-carboxylate: step 1/2. The polypeptide is Phosphoribosylaminoimidazole-succinocarboxamide synthase (Aeromonas salmonicida (strain A449)).